A 507-amino-acid polypeptide reads, in one-letter code: UDP-glycosyltransferase 73D1 (507 aa).

UDP-alpha-D-glucose is bound by residues Ser298, 359 to 361, 376 to 384, and 398 to 401; these read SPQ, HCGWNSTIE, and FAEQ.

This sequence belongs to the UDP-glycosyltransferase family.

This Arabidopsis thaliana (Mouse-ear cress) protein is UDP-glycosyltransferase 73D1 (UGT73D1).